The following is a 122-amino-acid chain: Large ribosomal subunit protein uL14 (122 aa).

The protein belongs to the universal ribosomal protein uL14 family. In terms of assembly, part of the 50S ribosomal subunit. Forms a cluster with proteins L3 and L19. In the 70S ribosome, L14 and L19 interact and together make contacts with the 16S rRNA in bridges B5 and B8.

Its function is as follows. Binds to 23S rRNA. Forms part of two intersubunit bridges in the 70S ribosome. This Corynebacterium kroppenstedtii (strain DSM 44385 / JCM 11950 / CIP 105744 / CCUG 35717) protein is Large ribosomal subunit protein uL14.